The sequence spans 113 residues: HIG1 domain-containing protein C25B8.07c, mitochondrial (113 aa).

Positions 1–27 are disordered; that stretch reads MSSKLPKKSEENLELPTFPASEESLSR. Positions 12-103 constitute an HIG1 domain; that stretch reads NLELPTFPAS…PPRREAPSNS (92 aa). Transmembrane regions (helical) follow at residues 39–59 and 75–95; these read PFIP…GYYI and VMSQ…IGPP.

The protein localises to the mitochondrion membrane. The chain is HIG1 domain-containing protein C25B8.07c, mitochondrial from Schizosaccharomyces pombe (strain 972 / ATCC 24843) (Fission yeast).